Reading from the N-terminus, the 487-residue chain is ATP-dependent rRNA helicase RRP3 (487 aa).

The segment at 22 to 67 (IKRKALEKQQQAHANEPSPSDEDSAQSNSKDSNSNEQPEESEEIFE) is disordered. The Q motif motif lies at 67–95 (ESFTELDLVPELIEACKNLNYNKPTPIQS). Positions 98 to 270 (IPPALKGSDI…RASLTNPVKC (173 aa)) constitute a Helicase ATP-binding domain. 111–118 (AQTGSGKT) provides a ligand contact to ATP. Positions 217-220 (DEAD) match the DEAD box motif. Residues 298–442 (LIYLLNEFIG…ENVDKDAILA (145 aa)) form the Helicase C-terminal domain. The interval 459 to 487 (NRRNKEKQARGKGRRGRMATRDNMDREER) is disordered. Residues 477–487 (ATRDNMDREER) are compositionally biased toward basic and acidic residues.

It belongs to the DEAD box helicase family. DDX47/RRP3 subfamily. In terms of assembly, interacts with the SSU processome.

It is found in the nucleus. It carries out the reaction ATP + H2O = ADP + phosphate + H(+). Functionally, ATP-dependent rRNA helicase required for pre-ribosomal RNA processing. Involved in the maturation of the 35S-pre-rRNA and to its cleavage to mature 18S rRNA. The sequence is that of ATP-dependent rRNA helicase RRP3 from Kluyveromyces lactis (strain ATCC 8585 / CBS 2359 / DSM 70799 / NBRC 1267 / NRRL Y-1140 / WM37) (Yeast).